The primary structure comprises 525 residues: GMP synthase [glutamine-hydrolyzing] (525 aa).

Positions 9–207 (RILILDFGSQ…VLEISGCEAL (199 aa)) constitute a Glutamine amidotransferase type-1 domain. The active-site Nucleophile is the Cys86. Active-site residues include His181 and Glu183. Positions 208-400 (WTPANIVEDA…LGLPYDMVYR (193 aa)) constitute a GMPS ATP-PPase domain. 235–241 (SGGVDSS) serves as a coordination point for ATP.

In terms of assembly, homodimer.

It catalyses the reaction XMP + L-glutamine + ATP + H2O = GMP + L-glutamate + AMP + diphosphate + 2 H(+). It functions in the pathway purine metabolism; GMP biosynthesis; GMP from XMP (L-Gln route): step 1/1. Functionally, catalyzes the synthesis of GMP from XMP. This Ectopseudomonas mendocina (strain ymp) (Pseudomonas mendocina) protein is GMP synthase [glutamine-hydrolyzing].